The primary structure comprises 408 residues: MTSHTLNELIAEGVRGRYILVRSDLNVPLDGSAVTDDGRIKASLPVLKKLSDAGARVLVTAHLGRPKGAPEDKYSLKPAAARLAELADFKVQLANDTVGDSAKELAAGLQDGEVLVLENVRFDARETSKDDAERGAFADELVALTGTNGAYVDDAFGAVHRKHASVFDVATRLPSYLGDLVHTEVEVLRKLTTDTQRPYVVVLGGSKVSDKLAVIDNLLGKADTILVGGGMLFTFLAAAGHKVAGSLLEEDQIPVVQDYLKRASDAGTSFVIPTDVVVASRFAADAEHEVVKADAIEDSTFGASGIGLDIGPESAAAFAAQIEGAKTVFWNGPMGVFEFEAFSSGTRAIAQALTDTVAFTVVGGGDSAAAVRTLGFEDSQFGHISTGGGASLEYLEGKELPGLSVLDR.

Substrate is bound by residues 24 to 26 (DLN), Arg39, 62 to 65 (HLGR), Arg121, and Arg161. Residues Lys211, Gly307, Glu338, and 364-367 (GGDS) each bind ATP.

The protein belongs to the phosphoglycerate kinase family. As to quaternary structure, monomer.

The protein localises to the cytoplasm. The enzyme catalyses (2R)-3-phosphoglycerate + ATP = (2R)-3-phospho-glyceroyl phosphate + ADP. It participates in carbohydrate degradation; glycolysis; pyruvate from D-glyceraldehyde 3-phosphate: step 2/5. The sequence is that of Phosphoglycerate kinase from Paenarthrobacter aurescens (strain TC1).